Here is a 396-residue protein sequence, read N- to C-terminus: Elongation factor Tu (396 aa).

One can recognise a tr-type G domain in the interval 10 to 206; it reads KPHCNIGTIG…TVDAYIPQPE (197 aa). Residues 19 to 26 are G1; sequence GHVDHGKT. 19 to 26 is a binding site for GTP; it reads GHVDHGKT. Mg(2+) is bound at residue Thr26. The tract at residues 60–64 is G2; that stretch reads GITIS. Residues 81 to 84 form a G3 region; it reads DCPG. GTP-binding positions include 81–85 and 136–139; these read DCPGH and NKVD. A G4 region spans residues 136 to 139; that stretch reads NKVD. Positions 174–176 are G5; sequence SAL.

The protein belongs to the TRAFAC class translation factor GTPase superfamily. Classic translation factor GTPase family. EF-Tu/EF-1A subfamily. Monomer.

The protein localises to the cytoplasm. It catalyses the reaction GTP + H2O = GDP + phosphate + H(+). Functionally, GTP hydrolase that promotes the GTP-dependent binding of aminoacyl-tRNA to the A-site of ribosomes during protein biosynthesis. This Methylocella silvestris (strain DSM 15510 / CIP 108128 / LMG 27833 / NCIMB 13906 / BL2) protein is Elongation factor Tu.